Here is a 574-residue protein sequence, read N- to C-terminus: Protein misato (574 aa).

Belongs to the misato family.

It localises to the mitochondrion. The protein is Protein misato (mst) of Drosophila melanogaster (Fruit fly).